The sequence spans 89 residues: DNA-directed RNA polymerase subunit Rpo6 (89 aa).

This sequence belongs to the archaeal Rpo6/eukaryotic RPB6 RNA polymerase subunit family. As to quaternary structure, part of the 13-subunit RNA polymerase complex.

Its subcellular location is the cytoplasm. It carries out the reaction RNA(n) + a ribonucleoside 5'-triphosphate = RNA(n+1) + diphosphate. Its function is as follows. DNA-dependent RNA polymerase (RNAP) catalyzes the transcription of DNA into RNA using the four ribonucleoside triphosphates as substrates. In terms of biological role, reconstitution experiments show this subunit is required for basic activity. This is DNA-directed RNA polymerase subunit Rpo6 from Sulfolobus acidocaldarius (strain ATCC 33909 / DSM 639 / JCM 8929 / NBRC 15157 / NCIMB 11770).